Reading from the N-terminus, the 227-residue chain is DNA repair protein RecO (227 aa).

The protein belongs to the RecO family.

Involved in DNA repair and RecF pathway recombination. The polypeptide is DNA repair protein RecO (Pseudomonas putida (strain ATCC 47054 / DSM 6125 / CFBP 8728 / NCIMB 11950 / KT2440)).